The sequence spans 524 residues: Gamma-taxilin (524 aa).

A compositionally biased stretch (basic and acidic residues) spans Met-1–Arg-10. Disordered regions lie at residues Met-1–Ile-37 and Leu-64–Ser-86. Residues Arg-12 and Arg-24 each carry the omega-N-methylarginine modification. Phosphoserine occurs at positions 79, 86, and 97. The span at Arg-106 to Arg-115 shows a compositional bias: basic and acidic residues. Residues Arg-106–Asn-130 are disordered. A coiled-coil region spans residues Glu-153–Asp-465. Tyr-283 is modified (phosphotyrosine). The segment at Val-501–Asp-524 is disordered. Ser-512 is subject to Phosphoserine.

Belongs to the taxilin family. As to quaternary structure, binds to the C-terminal coiled coil region of syntaxin family members STX1A, STX3A and STX4A. Forms a heterodimer with ATF4 in osteoblasts.

It is found in the nucleus membrane. The protein resides in the cytoplasm. Its subcellular location is the cytosol. In terms of biological role, may be involved in intracellular vesicle traffic. Inhibits ATF4-mediated transcription, possibly by dimerizing with ATF4 to form inactive dimers that cannot bind DNA. May be involved in regulating bone mass density through an ATF4-dependent pathway. May be involved in cell cycle progression. The sequence is that of Gamma-taxilin (Txlng) from Mus musculus (Mouse).